A 369-amino-acid polypeptide reads, in one-letter code: Anhydro-N-acetylmuramic acid kinase (369 aa).

12 to 19 (GTSLDGVD) lines the ATP pocket.

Belongs to the anhydro-N-acetylmuramic acid kinase family.

It catalyses the reaction 1,6-anhydro-N-acetyl-beta-muramate + ATP + H2O = N-acetyl-D-muramate 6-phosphate + ADP + H(+). It participates in amino-sugar metabolism; 1,6-anhydro-N-acetylmuramate degradation. The protein operates within cell wall biogenesis; peptidoglycan recycling. Catalyzes the specific phosphorylation of 1,6-anhydro-N-acetylmuramic acid (anhMurNAc) with the simultaneous cleavage of the 1,6-anhydro ring, generating MurNAc-6-P. Is required for the utilization of anhMurNAc either imported from the medium or derived from its own cell wall murein, and thus plays a role in cell wall recycling. The sequence is that of Anhydro-N-acetylmuramic acid kinase from Escherichia coli (strain SE11).